A 203-amino-acid polypeptide reads, in one-letter code: High frequency lysogenization protein HflD homolog (203 aa).

It belongs to the HflD family.

The protein resides in the cytoplasm. The protein localises to the cell inner membrane. This Pasteurella multocida (strain Pm70) protein is High frequency lysogenization protein HflD homolog.